Reading from the N-terminus, the 589-residue chain is Probable translation initiation factor IF-2 (589 aa).

Residues 5-219 (IRTPIVCVLG…IMIGLAQRYL (215 aa)) enclose the tr-type G domain. The interval 14 to 21 (GHVDHGKT) is G1. 14–21 (GHVDHGKT) serves as a coordination point for GTP. The tract at residues 39–43 (AITQH) is G2. Positions 75-78 (DTPG) are G3. GTP is bound by residues 75-79 (DTPGH) and 129-132 (TKLD). The G4 stretch occupies residues 129–132 (TKLD). Residues 197-199 (SSM) form a G5 region.

The protein belongs to the TRAFAC class translation factor GTPase superfamily. Classic translation factor GTPase family. IF-2 subfamily.

Functionally, function in general translation initiation by promoting the binding of the formylmethionine-tRNA to ribosomes. Seems to function along with eIF-2. The protein is Probable translation initiation factor IF-2 of Methanocorpusculum labreanum (strain ATCC 43576 / DSM 4855 / Z).